We begin with the raw amino-acid sequence, 338 residues long: Alanine racemase (338 aa).

The Proton acceptor; specific for D-alanine role is filled by Lys-33. Lys-33 is modified (N6-(pyridoxal phosphate)lysine). Arg-126 provides a ligand contact to substrate. Tyr-236 acts as the Proton acceptor; specific for L-alanine in catalysis. Met-284 contacts substrate.

The protein belongs to the alanine racemase family. The cofactor is pyridoxal 5'-phosphate.

It catalyses the reaction L-alanine = D-alanine. Its pathway is amino-acid biosynthesis; D-alanine biosynthesis; D-alanine from L-alanine: step 1/1. Catalyzes the interconversion of L-alanine and D-alanine. May also act on other amino acids. This chain is Alanine racemase (alr), found in Aquifex aeolicus (strain VF5).